Here is a 210-residue protein sequence, read N- to C-terminus: Protein GrpE (210 aa).

The segment at 1-31 (MAKDPQTPTDEELARAERDAEPQPGDATDDE) is disordered. Basic and acidic residues predominate over residues 12–21 (ELARAERDAE).

The protein belongs to the GrpE family. In terms of assembly, homodimer.

Its subcellular location is the cytoplasm. In terms of biological role, participates actively in the response to hyperosmotic and heat shock by preventing the aggregation of stress-denatured proteins, in association with DnaK and GrpE. It is the nucleotide exchange factor for DnaK and may function as a thermosensor. Unfolded proteins bind initially to DnaJ; upon interaction with the DnaJ-bound protein, DnaK hydrolyzes its bound ATP, resulting in the formation of a stable complex. GrpE releases ADP from DnaK; ATP binding to DnaK triggers the release of the substrate protein, thus completing the reaction cycle. Several rounds of ATP-dependent interactions between DnaJ, DnaK and GrpE are required for fully efficient folding. The protein is Protein GrpE of Chromohalobacter salexigens (strain ATCC BAA-138 / DSM 3043 / CIP 106854 / NCIMB 13768 / 1H11).